Here is an 892-residue protein sequence, read N- to C-terminus: Alpha-actinin-1 (892 aa).

An N-acetylmethionine modification is found at Met1. Residues 1–247 (MDHYDSQQTN…IMTYVSSFYH (247 aa)) form an actin-binding region. Phosphoserine is present on Ser6. The residue at position 12 (Tyr12) is a Phosphotyrosine; by FAK1. Calponin-homology (CH) domains lie at 31 to 135 (KQQR…LRFA) and 144 to 250 (TSAK…HAFS). Residues Lys95 and Lys195 each carry the N6-acetyllysine modification. 4 Spectrin repeats span residues 274-384 (QLME…WLLN), 394-499 (HLAE…ALER), 509-620 (QLYL…ALTE), and 630-733 (RLRK…EVEN). The interval 274-733 (QLMEDYEKLA…IARTINEVEN (460 aa)) is interaction with DDN. Position 471 is a phosphoserine (Ser471). Lys676 carries the N6-acetyllysine modification. A Phosphoserine modification is found at Ser677. 2 EF-hand domains span residues 746 to 781 (EQMNEFRASFNHFDRDHSGTLGPEEFKACLISLGYD) and 787 to 822 (QGEAEFARIMSIVDPNRLGVVTFQAFIDFMSRETAD). Residues Asp759, Asp761, Ser763, Thr765, and Glu770 each coordinate Ca(2+). Phosphoserine is present on Ser890.

It belongs to the alpha-actinin family. In terms of assembly, homodimer; antiparallel. Interacts with MYOZ2, TTID and LPP. Interacts with DDN. Interacts with PSD. Interacts with MICALL2. Interacts with DNM2 and CTTN. Interacts with PDLIM1. Interacts with PDLIM2. Interacts with PDLIM4 (via PDZ domain). Interacts with IGSF8.

It is found in the cytoplasm. The protein resides in the cytoskeleton. Its subcellular location is the myofibril. It localises to the sarcomere. The protein localises to the z line. It is found in the cell membrane. The protein resides in the cell junction. Its subcellular location is the cell projection. It localises to the ruffle. F-actin cross-linking protein which is thought to anchor actin to a variety of intracellular structures. Association with IGSF8 regulates the immune synapse formation and is required for efficient T-cell activation. The sequence is that of Alpha-actinin-1 (ACTN1) from Bos taurus (Bovine).